Reading from the N-terminus, the 271-residue chain is Calretinin (271 aa).

EF-hand domains are found at residues L16–A51, N63–F98, G107–K142, K151–F186, L195–K230, and M235–P270. D29, D31, N33, Y35, E40, D76, N78, D80, K82, E87, D120, D122, S124, Y126, E131, D164, N166, D168, K170, E175, D208, D210, S212, Y214, and E219 together coordinate Ca(2+). Phosphotyrosine is present on Y214.

It belongs to the calbindin family. As to expression, brain.

The protein localises to the synapse. It is found in the cell projection. Its subcellular location is the dendrite. Calcium-binding protein involved in calcium homeostasis and signal transduction. It plays a critical role in buffering intracellular calcium levels and modulating calcium-dependent signaling pathways. Predominantly expressed in specific neuronal populations, influences synaptic plasticity and neuronal excitability, contributing to learning and memory. During embryonic development, it facilitates neuronal differentiation and maturation. The chain is Calretinin from Homo sapiens (Human).